Consider the following 548-residue polypeptide: Acetolactate synthase isozyme 2 large subunit (548 aa).

A thiamine diphosphate-binding site is contributed by Glu47. FAD is bound by residues Arg149, 251–272 (HGTKAANFAVQECDLLIAVGAR), and 294–313 (DIDPAEMNKLRQAHVALQGD). The segment at 377 to 457 (QHQMWAAQHI…LKIVLLDNQR (81 aa)) is thiamine pyrophosphate binding. Mg(2+) contacts are provided by Asp428 and Asn455.

Belongs to the TPP enzyme family. Tetramer of two large (IlvG) and two small (IlvM) chains. FAD is required as a cofactor. It depends on Mg(2+) as a cofactor. Thiamine diphosphate serves as cofactor.

It catalyses the reaction 2 pyruvate + H(+) = (2S)-2-acetolactate + CO2. It participates in amino-acid biosynthesis; L-isoleucine biosynthesis; L-isoleucine from 2-oxobutanoate: step 1/4. The protein operates within amino-acid biosynthesis; L-valine biosynthesis; L-valine from pyruvate: step 1/4. With respect to regulation, inhibited by the herbicides chlorimuron ethyl, chlorsulfuron and imazapyr. Catalyzes the first step in the biosynthesis of branched-chain amino acids. This Escherichia coli (strain K12) protein is Acetolactate synthase isozyme 2 large subunit (ilvG).